A 359-amino-acid chain; its full sequence is Peptide chain release factor 1 (359 aa).

N5-methylglutamine is present on glutamine 236.

The protein belongs to the prokaryotic/mitochondrial release factor family. In terms of processing, methylated by PrmC. Methylation increases the termination efficiency of RF1.

The protein resides in the cytoplasm. Functionally, peptide chain release factor 1 directs the termination of translation in response to the peptide chain termination codons UAG and UAA. This is Peptide chain release factor 1 from Lacticaseibacillus casei (strain BL23) (Lactobacillus casei).